The chain runs to 252 residues: Centromere protein V (252 aa).

The tract at residues 1–80 (MRRTRSAVAT…EEPPPAVTPA (80 aa)) is disordered. Ser18 carries the post-translational modification Phosphoserine. Arg39 carries the omega-N-methylarginine modification. The span at 54 to 64 (SAKPRPKPPPR) shows a compositional bias: pro residues. The residue at position 78 (Thr78) is a Phosphothreonine. The 113-residue stretch at 125 to 237 (HTGGCHCGAV…TEEFNGSDWE (113 aa)) folds into the CENP-V/GFA domain. Residues Cys129, Cys131, Cys149, Cys151, Cys154, Cys193, and Cys196 each coordinate Zn(2+). The residue at position 234 (Ser234) is a Phosphoserine.

It belongs to the Gfa family. Zn(2+) is required as a cofactor.

The protein localises to the chromosome. It is found in the centromere. Its subcellular location is the kinetochore. It localises to the nucleus. The protein resides in the cytoplasm. The protein localises to the cytoskeleton. It is found in the spindle. Its function is as follows. Required for distribution of pericentromeric heterochromatin in interphase nuclei and for centromere formation and organization, chromosome alignment and cytokinesis. The chain is Centromere protein V (Cenpv) from Mus musculus (Mouse).